The chain runs to 41 residues: MKIRNSLKSAKVRDKDCRVVRRRGRVYIINKKNPRMKARQG.

The protein belongs to the bacterial ribosomal protein bL36 family.

In Gluconobacter oxydans (strain 621H) (Gluconobacter suboxydans), this protein is Large ribosomal subunit protein bL36.